We begin with the raw amino-acid sequence, 150 residues long: D-aminoacyl-tRNA deacylase (150 aa).

The Gly-cisPro motif, important for rejection of L-amino acids signature appears at 138–139 (GP).

The protein belongs to the DTD family. Homodimer.

It is found in the cytoplasm. The catalysed reaction is glycyl-tRNA(Ala) + H2O = tRNA(Ala) + glycine + H(+). It carries out the reaction a D-aminoacyl-tRNA + H2O = a tRNA + a D-alpha-amino acid + H(+). In terms of biological role, an aminoacyl-tRNA editing enzyme that deacylates mischarged D-aminoacyl-tRNAs. Also deacylates mischarged glycyl-tRNA(Ala), protecting cells against glycine mischarging by AlaRS. Acts via tRNA-based rather than protein-based catalysis; rejects L-amino acids rather than detecting D-amino acids in the active site. By recycling D-aminoacyl-tRNA to D-amino acids and free tRNA molecules, this enzyme counteracts the toxicity associated with the formation of D-aminoacyl-tRNA entities in vivo and helps enforce protein L-homochirality. In Salinibacter ruber (strain DSM 13855 / M31), this protein is D-aminoacyl-tRNA deacylase.